The sequence spans 506 residues: Pisatin demethylase (506 aa).

Cysteine 453 contacts heme.

Belongs to the cytochrome P450 family. Requires heme as cofactor.

Can detoxify the phytoalexin pisatin from garden pea. Pisatin is an antimicrobial compound produced by pea in response to infection by plant pathogens. The polypeptide is Pisatin demethylase (PDA6-1) (Fusarium vanettenii (Neocosmospora pisi)).